Reading from the N-terminus, the 136-residue chain is Holo-[acyl-carrier-protein] synthase (136 aa).

Mg(2+)-binding residues include D8 and E57.

It belongs to the P-Pant transferase superfamily. AcpS family. It depends on Mg(2+) as a cofactor.

It localises to the cytoplasm. It catalyses the reaction apo-[ACP] + CoA = holo-[ACP] + adenosine 3',5'-bisphosphate + H(+). Its function is as follows. Transfers the 4'-phosphopantetheine moiety from coenzyme A to a Ser of acyl-carrier-protein. The sequence is that of Holo-[acyl-carrier-protein] synthase from Methylorubrum populi (strain ATCC BAA-705 / NCIMB 13946 / BJ001) (Methylobacterium populi).